The chain runs to 21 residues: Outer membrane protein A (21 aa).

The beta stranded transmembrane segment at 6–16 threads the bilayer; the sequence is TWYTGAKLGWS.

It belongs to the outer membrane OOP (TC 1.B.6) superfamily. OmpA family. In terms of assembly, monomer and homodimer.

Its subcellular location is the cell outer membrane. In terms of biological role, with TolR probably plays a role in maintaining the position of the peptidoglycan cell wall in the periplasm. Acts as a porin with low permeability that allows slow penetration of small solutes; an internal gate slows down solute passage. The sequence is that of Outer membrane protein A from Actinobacillus lignieresii.